A 381-amino-acid chain; its full sequence is MSNRTIFEEVSSDSKQQSSPTPGGIDRKRRGARGAIRVWLAVLFALVVAMIAVGGLTRLTDSGLSITEWRPVTGAVPPMSEAEWQAEFEKYKQIDQYHLMNTWMELSDFKTIYWWEWGHRQLGRVIGLIWALGFFGFLVTRSIPTGWTGRLLLPGILGGVQGAIGWWMVASGVTLGEGMTSVASYRLATHLGLAFVILGFLAWYMFLLGREERDLMQARRLKEEKLFGMSTGLLHFAFLQILLGALVAGIDAGRSYTDWPLMGGQIFPPRPFMIEPLWKNFFENPGLVQFIHRVAGYLLFAFAVVVWLRGRRSAHKATQFAFNAVFAALSLQLVIGIVTVMTAAPVEIAIVHQAVAVLVWVLILRARFLSAYPVATSIKGH.

Residues 1-28 form a disordered region; sequence MSNRTIFEEVSSDSKQQSSPTPGGIDRK. Helical transmembrane passes span 36-56, 125-145, 151-171, 187-207, 230-250, 287-307, 320-340, and 344-364; these read IRVWLAVLFALVVAMIAVGGL, VIGLIWALGFFGFLVTRSIPT, LLLPGILGGVQGAIGWWMVAS, LATHLGLAFVILGFLAWYMFL, STGLLHFAFLQILLGALVAGI, LVQFIHRVAGYLLFAFAVVVW, FAFNAVFAALSLQLVIGIVTV, and APVEIAIVHQAVAVLVWVLIL. His-292 is a binding site for heme. Residue His-352 coordinates heme.

Belongs to the COX15/CtaA family. Type 2 subfamily. As to quaternary structure, interacts with CtaB. The cofactor is heme b.

The protein resides in the cell membrane. It catalyses the reaction Fe(II)-heme o + 2 A + H2O = Fe(II)-heme a + 2 AH2. It functions in the pathway porphyrin-containing compound metabolism; heme A biosynthesis; heme A from heme O: step 1/1. Catalyzes the conversion of heme O to heme A by two successive hydroxylations of the methyl group at C8. The first hydroxylation forms heme I, the second hydroxylation results in an unstable dihydroxymethyl group, which spontaneously dehydrates, resulting in the formyl group of heme A. In Ruegeria sp. (strain TM1040) (Silicibacter sp.), this protein is Heme A synthase.